We begin with the raw amino-acid sequence, 290 residues long: Elongation factor Ts (290 aa).

An involved in Mg(2+) ion dislocation from EF-Tu region spans residues 81-84 (TDFV).

It belongs to the EF-Ts family.

The protein localises to the cytoplasm. Associates with the EF-Tu.GDP complex and induces the exchange of GDP to GTP. It remains bound to the aminoacyl-tRNA.EF-Tu.GTP complex up to the GTP hydrolysis stage on the ribosome. The sequence is that of Elongation factor Ts from Saccharophagus degradans (strain 2-40 / ATCC 43961 / DSM 17024).